Here is a 529-residue protein sequence, read N- to C-terminus: Glutamyl-tRNA(Gln) amidotransferase subunit B-2, chloroplastic/mitochondrial (529 aa).

Residues 17 to 61 are disordered; the sequence is STRVSLPRGSIPPPPTSSSSSSSSSREGRRPRFFSTTTTSAERPV.

Belongs to the GatB/GatE family. GatB subfamily. As to quaternary structure, subunit of the heterotrimeric GatCAB amidotransferase (AdT) complex, composed of A, B and C subunits.

It is found in the mitochondrion. Its subcellular location is the plastid. The protein resides in the chloroplast. It catalyses the reaction L-glutamyl-tRNA(Gln) + L-glutamine + ATP + H2O = L-glutaminyl-tRNA(Gln) + L-glutamate + ADP + phosphate + H(+). In terms of biological role, allows the formation of correctly charged Gln-tRNA(Gln) through the transamidation of misacylated Glu-tRNA(Gln) in chloroplasts and mitochondria. The reaction takes place in the presence of glutamine and ATP through an activated gamma-phospho-Glu-tRNA(Gln). The polypeptide is Glutamyl-tRNA(Gln) amidotransferase subunit B-2, chloroplastic/mitochondrial (Micromonas commoda (strain RCC299 / NOUM17 / CCMP2709) (Picoplanktonic green alga)).